Consider the following 395-residue polypeptide: uncharacterized protein (395 aa).

Positions 1 to 18 (MKHVIMLYFIAAATLFSS) are cleaved as a signal peptide. Cysteine 19 is lipidated: N-palmitoyl cysteine. Cysteine 19 carries S-diacylglycerol cysteine lipidation.

The protein localises to the cell outer membrane. In terms of biological role, may be involved in ulvan degradation. Ulvan is the main polysaccharide component of the Ulvales (green seaweed) cell wall. It is composed of disaccharide building blocks comprising 3-sulfated rhamnose (Rha3S) linked to D-glucuronic acid (GlcA), L-iduronic acid (IduA), or D-xylose (Xyl). This is an uncharacterized protein from Formosa agariphila (strain DSM 15362 / KCTC 12365 / LMG 23005 / KMM 3901 / M-2Alg 35-1).